The following is a 138-amino-acid chain: Basic phospholipase A2 homolog G6K49 (138 aa).

The N-terminal stretch at 1 to 16 is a signal peptide; sequence MRTLWIMAVLLLGVEG. Disulfide bonds link Cys-42–Cys-132, Cys-44–Cys-60, Cys-59–Cys-112, Cys-65–Cys-138, Cys-66–Cys-105, Cys-73–Cys-98, and Cys-91–Cys-103. The important for membrane-damaging activities in eukaryotes and bacteria; heparin-binding stretch occupies residues 122–133; sequence KKHRVTVKFLCK.

It belongs to the phospholipase A2 family. Group II subfamily. K49 sub-subfamily. In terms of assembly, homodimer; non-covalently linked. In terms of tissue distribution, expressed by the venom gland.

It localises to the secreted. In terms of biological role, snake venom phospholipase A2 (PLA2) that lacks enzymatic activity. Displays myotoxic activities. A model of myotoxic mechanism has been proposed: an apo Lys49-PLA2 is activated by the entrance of a hydrophobic molecule (e.g. fatty acid) at the hydrophobic channel of the protein leading to a reorientation of a monomer. This reorientation causes a transition between 'inactive' to 'active' states, causing alignment of C-terminal and membrane-docking sites (MDoS) side-by-side and putting the membrane-disruption sites (MDiS) in the same plane, exposed to solvent and in a symmetric position for both monomers. The MDoS region stabilizes the toxin on membrane by the interaction of charged residues with phospholipid head groups. Subsequently, the MDiS region destabilizes the membrane with penetration of hydrophobic residues. This insertion causes a disorganization of the membrane, allowing an uncontrolled influx of ions (i.e. calcium and sodium), and eventually triggering irreversible intracellular alterations and cell death. In Calloselasma rhodostoma (Malayan pit viper), this protein is Basic phospholipase A2 homolog G6K49.